The following is a 649-amino-acid chain: Protein teflon (649 aa).

The C2H2-type 1 zinc finger occupies 33–56 (LYCHFCRDLFTQLPEFLRHLQSNH). The tract at residues 78–126 (EQGKAHEDAQSAGHNSSSGDSSSLMNSEDSRAIEGSEDNSDNSPMKPEQ) is disordered. The span at 88-104 (SAGHNSSSGDSSSLMNS) shows a compositional bias: low complexity. 2 C2H2-type zinc fingers span residues 599 to 621 (YFCK…LISH) and 625 to 648 (FQCT…RNAH).

Belongs to the Teflon family. As to expression, expressed at a low level in a variety of tissues, highest expression is in testis.

Its subcellular location is the nucleus. It localises to the chromosome. In terms of biological role, specifically required in males for proper segregation of autosomal bivalents at meiosis I. Expression is required in the male germ line prior to spermatocyte stage S4. May have a role as a bridging molecule maintaining adhesion to hold autosome bivalents together via heterochromatic connections. The chain is Protein teflon from Drosophila melanogaster (Fruit fly).